A 449-amino-acid chain; its full sequence is Gamma-glutamyl phosphate reductase (449 aa).

Belongs to the gamma-glutamyl phosphate reductase family.

It is found in the cytoplasm. The catalysed reaction is L-glutamate 5-semialdehyde + phosphate + NADP(+) = L-glutamyl 5-phosphate + NADPH + H(+). It functions in the pathway amino-acid biosynthesis; L-proline biosynthesis; L-glutamate 5-semialdehyde from L-glutamate: step 2/2. In terms of biological role, catalyzes the NADPH-dependent reduction of L-glutamate 5-phosphate into L-glutamate 5-semialdehyde and phosphate. The product spontaneously undergoes cyclization to form 1-pyrroline-5-carboxylate. This Methanococcoides burtonii (strain DSM 6242 / NBRC 107633 / OCM 468 / ACE-M) protein is Gamma-glutamyl phosphate reductase.